A 456-amino-acid polypeptide reads, in one-letter code: Tyrosinase-like protein 2 (456 aa).

Positions Met-1 to Cys-22 are cleaved as a signal peptide. His-145, His-154, His-163, His-295, His-299, and His-322 together coordinate Cu cation.

Requires Cu(2+) as cofactor. As to expression, prismatic layer of shell (at protein level).

It localises to the secreted. This is Tyrosinase-like protein 2 from Margaritifera margaritifera (Freshwater pearl mussel).